A 610-amino-acid chain; its full sequence is UvrABC system protein C (610 aa).

Residues 16–94 (SQPGVYRMYD…IKLYQPRYNV (79 aa)) form the GIY-YIG domain. One can recognise a UVR domain in the interval 204–239 (DQVLTQLIARMEKASQSLEFEEAARIRDQIQAVRRV). The tract at residues 540-559 (HAISGHRKKRAKVKSTSSLE) is disordered. The span at 543-552 (SGHRKKRAKV) shows a compositional bias: basic residues.

The protein belongs to the UvrC family. Interacts with UvrB in an incision complex.

The protein resides in the cytoplasm. Functionally, the UvrABC repair system catalyzes the recognition and processing of DNA lesions. UvrC both incises the 5' and 3' sides of the lesion. The N-terminal half is responsible for the 3' incision and the C-terminal half is responsible for the 5' incision. In Klebsiella pneumoniae (strain 342), this protein is UvrABC system protein C.